The following is a 61-amino-acid chain: Small ribosomal subunit protein eS30A (61 aa).

The disordered stretch occupies residues 1-36; that stretch reads MGKVHGSLARAGKVKSQTPKVEKQEKPKQPKGRAYK.

The protein belongs to the eukaryotic ribosomal protein eS30 family. In terms of assembly, component of the small ribosomal subunit (SSU). Mature yeast ribosomes consist of a small (40S) and a large (60S) subunit. The 40S small subunit contains 1 molecule of ribosomal RNA (18S rRNA) and at least 33 different proteins. The large 60S subunit contains 3 rRNA molecules (25S, 5.8S and 5S rRNA) and at least 46 different proteins.

It is found in the cytoplasm. It localises to the nucleus. Its function is as follows. Component of the ribosome, a large ribonucleoprotein complex responsible for the synthesis of proteins in the cell. The small ribosomal subunit (SSU) binds messenger RNAs (mRNAs) and translates the encoded message by selecting cognate aminoacyl-transfer RNA (tRNA) molecules. The large subunit (LSU) contains the ribosomal catalytic site termed the peptidyl transferase center (PTC), which catalyzes the formation of peptide bonds, thereby polymerizing the amino acids delivered by tRNAs into a polypeptide chain. The nascent polypeptides leave the ribosome through a tunnel in the LSU and interact with protein factors that function in enzymatic processing, targeting, and the membrane insertion of nascent chains at the exit of the ribosomal tunnel. The polypeptide is Small ribosomal subunit protein eS30A (rps3001) (Schizosaccharomyces pombe (strain 972 / ATCC 24843) (Fission yeast)).